Reading from the N-terminus, the 576-residue chain is Vacuolar protein sorting-associated protein vps5 (576 aa).

2 disordered regions span residues 1–60 and 156–198; these read MLGH…PRKR and DAAS…APQS. Residue Thr-55 is modified to Phosphothreonine. A compositionally biased stretch (polar residues) spans 156 to 169; sequence DAASSSAPNFTHTV. The segment covering 170–181 has biased composition (low complexity); sequence SSASSQKQGSTS. The PX domain maps to 200-317; the sequence is TPFYIQVHDP…KLFLEAETFD (118 aa). Residues Arg-244, Lys-270, and Arg-284 each contribute to the a 1,2-diacyl-sn-glycero-3-phospho-(1D-myo-inositol-3-phosphate) site. A Phosphoserine modification is found at Ser-332.

The protein belongs to the sorting nexin family. In terms of assembly, component of the retromer complex which consists of vps29, vps26, vps35, vps5 and vps17.

It localises to the cytoplasm. The protein resides in the golgi apparatus. Its subcellular location is the membrane. Required for efficient sporulation target of PtdIns(3)P in vesicle transport required for onset of the forespore membrane formation. Its function is as follows. Plays a role in vesicular protein sorting. Required for the endosome-to-Golgi retrieval of the vacuolar protein sorting receptor pep1/vps10. Component of the membrane-associated retromer complex which is essential in endosome-to-Golgi retrograde transport. The vps29-vps26-vps35 subcomplex may be involved in cargo selection. This is Vacuolar protein sorting-associated protein vps5 (vps5) from Schizosaccharomyces pombe (strain 972 / ATCC 24843) (Fission yeast).